A 234-amino-acid chain; its full sequence is MAKLTKRMRVIRDKVDVTKQYDINEAVALLKELATAKFVESVDVAVNLGIDARKSDQNVRGATVLPHGTGRSVRVAVFTQGANAEAAKAAGAEFVGMEDLAEQIKKGEMGFDVVIASPDAMRVVGQLGQVLGPRGLMPNPKVGTVTPNVAEAVNNAKAGQVRYRNDKNGIIHTTIGKVDFDSNKLKENLEALLVALKKAKPSQAKGVYIKKVSLSTTMGAGVAVDQSGLNAAAN.

This sequence belongs to the universal ribosomal protein uL1 family. As to quaternary structure, part of the 50S ribosomal subunit.

Binds directly to 23S rRNA. The L1 stalk is quite mobile in the ribosome, and is involved in E site tRNA release. In terms of biological role, protein L1 is also a translational repressor protein, it controls the translation of the L11 operon by binding to its mRNA. This is Large ribosomal subunit protein uL1 from Pectobacterium carotovorum subsp. carotovorum (strain PC1).